A 198-amino-acid polypeptide reads, in one-letter code: Elongation factor Ts (198 aa).

The interval 82-85 (TDFV) is involved in Mg(2+) ion dislocation from EF-Tu.

It belongs to the EF-Ts family.

The protein resides in the cytoplasm. In terms of biological role, associates with the EF-Tu.GDP complex and induces the exchange of GDP to GTP. It remains bound to the aminoacyl-tRNA.EF-Tu.GTP complex up to the GTP hydrolysis stage on the ribosome. In Oleidesulfovibrio alaskensis (strain ATCC BAA-1058 / DSM 17464 / G20) (Desulfovibrio alaskensis), this protein is Elongation factor Ts.